Here is a 526-residue protein sequence, read N- to C-terminus: Putative UDP-glucuronosyltransferase ugt-48 (526 aa).

Residues 1–17 form the signal peptide; it reads MLLRILTFLAVCQVTTS. Asparagine 58 and asparagine 305 each carry an N-linked (GlcNAc...) asparagine glycan. A helical transmembrane segment spans residues 489 to 509; it reads FYNLDIIITAASIPVLIFIVL. N-linked (GlcNAc...) asparagine glycosylation occurs at asparagine 513.

It belongs to the UDP-glycosyltransferase family. As to quaternary structure, interacts with cmd-1 in the presence of Ca(2+).

It is found in the membrane. The enzyme catalyses glucuronate acceptor + UDP-alpha-D-glucuronate = acceptor beta-D-glucuronoside + UDP + H(+). In Caenorhabditis elegans, this protein is Putative UDP-glucuronosyltransferase ugt-48 (ugt-48).